We begin with the raw amino-acid sequence, 189 residues long: Small ribosomal subunit protein uS5 (189 aa).

The S5 DRBM domain occupies Phe20 to Val83.

Belongs to the universal ribosomal protein uS5 family. In terms of assembly, part of the 30S ribosomal subunit. Contacts proteins S4 and S8.

Functionally, with S4 and S12 plays an important role in translational accuracy. In terms of biological role, located at the back of the 30S subunit body where it stabilizes the conformation of the head with respect to the body. The protein is Small ribosomal subunit protein uS5 of Methylocella silvestris (strain DSM 15510 / CIP 108128 / LMG 27833 / NCIMB 13906 / BL2).